A 497-amino-acid chain; its full sequence is MTSYQRTVTVRSSTAPKSFTSRSYTGGRFATKASTGPLSLGSVYGGGSGRIGATTAFSTSTSYGGGSSFSGISAGTGFPPITNVTVNKSLLAPLNLEIDPRIGQVRLEEKEQIKTLNNQFAGFIDKVRYLEQQNKLLETKWQLLQNQTTPSRSNLDSMFEAYISNLRRQLDTLGQEKGKLEAELHNMQGLVEDFKNKYEDEINKRTDTENEFVLIKKDVDEAYMNKVELEAKLEALTDEINFLRQIYDEEIRELQTQIQDTSVIVQMDNNRQLDLDNIIAEVRAQYEDMAKKSRAEAETYYQQKYEELSSSAGKYGDDLRNTKNEIAELTRYINRLNSDIDALKGQRANLEAAIAEAEERGEQAVKNAQAQLQELQNALTQAKQDMARQLREYQELMNVKLALDIEIATYRKLLEGEESRLASGIQAATVQVNQSSYSGVRAPILSSGFGSGSFQTSSYSSFPLETSYSSPKKSIIVKTIESRDGKIVSERSNIVKE.

Residues 2–108 (TSYQRTVTVR…DPRIGQVRLE (107 aa)) form a head region. The coil 1A stretch occupies residues 109 to 149 (EKEQIKTLNNQFAGFIDKVRYLEQQNKLLETKWQLLQNQTT). An IF rod domain is found at 109–421 (EKEQIKTLNN…KLLEGEESRL (313 aa)). Residues 145–162 (QNQTTPSRSNLDSMFEAY) are linker 1. The interval 163-254 (ISNLRRQLDT…QIYDEEIREL (92 aa)) is coil 1B. The interval 255-278 (QTQIQDTSVIVQMDNNRQLDLDNI) is linker 12. The coil 2 stretch occupies residues 279 to 417 (IAEVRAQYED…ATYRKLLEGE (139 aa)). The interval 418–497 (ESRLASGIQA…VSERSNIVKE (80 aa)) is tail.

Belongs to the intermediate filament family. In terms of assembly, heterotetramer of two type I and two type II keratins. Keratin-8 associates with keratin-18. In terms of tissue distribution, expressed in skin.

It is found in the cytoplasm. It localises to the nucleus. Its subcellular location is the nucleoplasm. The protein resides in the nucleus matrix. Together with KRT19, helps to link the contractile apparatus to dystrophin at the costameres of striated muscle. The chain is Keratin, type II cytoskeletal 8 from Protopterus aethiopicus (Marbled lungfish).